The chain runs to 398 residues: O-methyltransferase mpaG (398 aa).

Serine 144 serves as a coordination point for (4E,8E)-10-(4,6-dihydroxy-7-methyl-3-oxo-1,3-dihydro-2-benzofuran-5-yl)-4,8-dimethyldeca-4,8-dienoate. Serine 144 lines the 4-farnesyl-3,5-dihydroxy-6-methylphthalide pocket. Serine 144 is a binding site for 6-O-desmethylmycophenolate. Asparagine 197 lines the S-adenosyl-L-homocysteine pocket. Tyrosine 199 contributes to the (4E,8E)-10-(4,6-dihydroxy-7-methyl-3-oxo-1,3-dihydro-2-benzofuran-5-yl)-4,8-dimethyldeca-4,8-dienoate binding site. Tyrosine 199 serves as a coordination point for 4-farnesyl-3,5-dihydroxy-6-methylphthalide. Position 199 (tyrosine 199) interacts with 6-O-desmethylmycophenolate. S-adenosyl-L-homocysteine-binding residues include tyrosine 203, aspartate 237, glycine 239, histidine 244, aspartate 245, aspartate 264, and arginine 265. S-adenosyl-L-methionine is bound at residue aspartate 264. Residues arginine 265 and glutamine 267 each contribute to the (4E,8E)-10-(4,6-dihydroxy-7-methyl-3-oxo-1,3-dihydro-2-benzofuran-5-yl)-4,8-dimethyldeca-4,8-dienoate site. Arginine 265 contacts 6-O-desmethylmycophenolate. Aspartate 286, isoleucine 287, and histidine 302 together coordinate S-adenosyl-L-homocysteine. Residue serine 303 participates in (4E,8E)-10-(4,6-dihydroxy-7-methyl-3-oxo-1,3-dihydro-2-benzofuran-5-yl)-4,8-dimethyldeca-4,8-dienoate binding. Serine 303 is a binding site for 4-farnesyl-3,5-dihydroxy-6-methylphthalide. Position 303 (serine 303) interacts with 6-O-desmethylmycophenolate. The active-site Proton acceptor is histidine 306. Residues glutamate 335 and glutamate 362 contribute to the active site.

The protein belongs to the class I-like SAM-binding methyltransferase superfamily. Cation-independent O-methyltransferase family. COMT subfamily. As to quaternary structure, homodimer.

The protein localises to the cytoplasm. The protein resides in the cytosol. The catalysed reaction is (4E,8E)-10-(4,6-dihydroxy-7-methyl-3-oxo-1,3-dihydro-2-benzofuran-5-yl)-4,8-dimethyldeca-4,8-dienoate + S-adenosyl-L-methionine = (4E,8E)-10-(4-hydroxy-6-methoxy-7-methyl-3-oxo-1,3-dihydro-2-benzofuran-5-yl)-4,8-dimethyldeca-4,8-dienoate + S-adenosyl-L-homocysteine + H(+). It catalyses the reaction 4-farnesyl-3,5-dihydroxy-6-methylphthalide + S-adenosyl-L-methionine = 4-farnesyl-3,5-dihydroxy-6-methoxylphthalide + S-adenosyl-L-homocysteine + H(+). The enzyme catalyses 6-O-desmethylmycophenolate + S-adenosyl-L-methionine = mycophenolate + S-adenosyl-L-homocysteine + H(+). It functions in the pathway secondary metabolite biosynthesis; terpenoid biosynthesis. In terms of biological role, O-methyltransferase; part of the gene cluster that mediates the biosynthesis of mycophenolic acid (MPA), the first isolated antibiotic natural product in the world obtained from a culture of Penicillium brevicompactum in 1893. MpaG methylates farnesyl-DHMP-3C (FDHMP-3C) to yield MFDHMP-3C. The first step of the pathway is the synthesis of 5-methylorsellinic acid (5MOA) by the cytosolic polyketide synthase mpaC. 5MOA is then converted to the phthalide compound 5,7-dihydroxy-4,6-dimethylphthalide (DHMP) by the endoplasmic reticulum-bound cytochrome P450 monooxygenase mpaDE. MpaDE first catalyzes hydroxylation of 5-MOA to 4,6-dihydroxy-2-(hydroxymethyl)-3-methylbenzoic acid (DHMB). MpaDE then acts as a lactone synthase that catalyzes the ring closure to convert DHMB into DHMP. The next step is the prenylation of DHMP by the Golgi apparatus-associated prenyltransferase mpaA to yield farnesyl-DHMP (FDHMP). The ER-bound oxygenase mpaB then mediates the oxidative cleavage the C19-C20 double bond in FDHMP to yield FDHMP-3C via a mycophenolic aldehyde intermediate. The O-methyltransferase mpaG catalyzes the methylation of FDHMP-3C to yield MFDHMP-3C. MpaG and mpaB can also switch the order in which they act and, in this case, the conversion of FDHMP to MFDHMP-3C can take place via 5-O-methyl-FDHMP (MFDHMP). After the cytosolic methylation of FDHMP-3C, MFDHMP-3C enters into peroxisomes probably via free diffusion due to its low molecular weight. Upon a peroxisomal CoA ligation reaction, catalyzed by a beta-oxidation component enzyme acyl-CoA ligase ACL891, MFDHMP-3C-CoA would then be restricted to peroxisomes for the following beta-oxidation pathway steps. The peroxisomal beta-oxidation machinery than converts MFDHMP-3C-CoA into MPA_CoA, via a beta-oxidation chain-shortening process. Finally mpaH acts as a peroxisomal acyl-CoA hydrolase with high substrate specificity toward MPA-CoA to release the final product MPA. MpaH can also hydrolyze DMMPA-CoA to release demethylmycophenolic acid (DMMPA) that is further converted to MPA by mpaG. The sequence is that of O-methyltransferase mpaG from Penicillium brevicompactum.